A 233-amino-acid polypeptide reads, in one-letter code: 5'-methylthioadenosine/S-adenosylhomocysteine nucleosidase (233 aa).

Glu12 acts as the Proton acceptor in catalysis. Substrate is bound by residues Gly78, Ile156, and 177–178 (ME). The Proton donor role is filled by Asp201.

This sequence belongs to the PNP/UDP phosphorylase family. MtnN subfamily.

The enzyme catalyses S-adenosyl-L-homocysteine + H2O = S-(5-deoxy-D-ribos-5-yl)-L-homocysteine + adenine. It carries out the reaction S-methyl-5'-thioadenosine + H2O = 5-(methylsulfanyl)-D-ribose + adenine. The catalysed reaction is 5'-deoxyadenosine + H2O = 5-deoxy-D-ribose + adenine. The protein operates within amino-acid biosynthesis; L-methionine biosynthesis via salvage pathway; S-methyl-5-thio-alpha-D-ribose 1-phosphate from S-methyl-5'-thioadenosine (hydrolase route): step 1/2. In terms of biological role, catalyzes the irreversible cleavage of the glycosidic bond in both 5'-methylthioadenosine (MTA) and S-adenosylhomocysteine (SAH/AdoHcy) to adenine and the corresponding thioribose, 5'-methylthioribose and S-ribosylhomocysteine, respectively. Also cleaves 5'-deoxyadenosine, a toxic by-product of radical S-adenosylmethionine (SAM) enzymes, into 5-deoxyribose and adenine. The sequence is that of 5'-methylthioadenosine/S-adenosylhomocysteine nucleosidase from Listeria monocytogenes serotype 4b (strain F2365).